Consider the following 433-residue polypeptide: tRNA-2-methylthio-N(6)-dimethylallyladenosine synthase (433 aa).

Positions 4-119 (KKLFIQTLGC…ITQAIKTPKF (116 aa)) constitute an MTTase N-terminal domain. [4Fe-4S] cluster-binding residues include C13, C50, C82, C151, C155, and C158. The region spanning 137 to 370 (RNSIYKSYIN…QNRHSEILDK (234 aa)) is the Radical SAM core domain. The TRAM domain maps to 373–433 (KKQENKTFKV…KRMVLYGEIV (61 aa)).

It belongs to the methylthiotransferase family. MiaB subfamily. As to quaternary structure, monomer. It depends on [4Fe-4S] cluster as a cofactor.

It localises to the cytoplasm. The catalysed reaction is N(6)-dimethylallyladenosine(37) in tRNA + (sulfur carrier)-SH + AH2 + 2 S-adenosyl-L-methionine = 2-methylsulfanyl-N(6)-dimethylallyladenosine(37) in tRNA + (sulfur carrier)-H + 5'-deoxyadenosine + L-methionine + A + S-adenosyl-L-homocysteine + 2 H(+). Its function is as follows. Catalyzes the methylthiolation of N6-(dimethylallyl)adenosine (i(6)A), leading to the formation of 2-methylthio-N6-(dimethylallyl)adenosine (ms(2)i(6)A) at position 37 in tRNAs that read codons beginning with uridine. This chain is tRNA-2-methylthio-N(6)-dimethylallyladenosine synthase, found in Campylobacter jejuni subsp. jejuni serotype O:2 (strain ATCC 700819 / NCTC 11168).